The chain runs to 352 residues: Protein MGF 360-16R (352 aa).

It belongs to the asfivirus MGF 360 family.

Plays a role in virus cell tropism, and may be required for efficient virus replication in macrophages. The chain is Protein MGF 360-16R from Ornithodoros (relapsing fever ticks).